Consider the following 444-residue polypeptide: Trigger factor (444 aa).

Residues 165 to 250 form the PPIase FKBP-type domain; it reads GDFAKFDFEG…LHEIQELKIP (86 aa).

Belongs to the FKBP-type PPIase family. Tig subfamily.

It localises to the cytoplasm. The enzyme catalyses [protein]-peptidylproline (omega=180) = [protein]-peptidylproline (omega=0). Involved in protein export. Acts as a chaperone by maintaining the newly synthesized protein in an open conformation. Functions as a peptidyl-prolyl cis-trans isomerase. The polypeptide is Trigger factor (Campylobacter jejuni subsp. jejuni serotype O:6 (strain 81116 / NCTC 11828)).